The sequence spans 463 residues: Asparagine--tRNA ligase (463 aa).

This sequence belongs to the class-II aminoacyl-tRNA synthetase family. As to quaternary structure, homodimer.

It localises to the cytoplasm. It catalyses the reaction tRNA(Asn) + L-asparagine + ATP = L-asparaginyl-tRNA(Asn) + AMP + diphosphate + H(+). This chain is Asparagine--tRNA ligase, found in Bacillus cereus (strain ATCC 10987 / NRS 248).